The primary structure comprises 185 residues: Alpha-S1-casein (185 aa).

A signal peptide spans 1 to 15; the sequence is MRLLILTCLVAVALA. Phosphoserine occurs at positions 31, 33, 41, 71, 85, 86, 88, 89, 90, and 91.

Belongs to the alpha-casein family. Heteromultimers of alpha-s1 casein and kappa-casein; disulfide-linked. In terms of processing, not glycosylated. As to expression, mammary gland specific. Secreted in milk.

The protein localises to the secreted. Its function is as follows. Important role in the capacity of milk to transport calcium phosphate. In terms of biological role, casoxin D acts as opioid antagonist and has vasorelaxing activity mediated by bradykinin B1 receptors. The sequence is that of Alpha-S1-casein (CSN1S1) from Homo sapiens (Human).